The sequence spans 423 residues: 3-phosphoshikimate 1-carboxyvinyltransferase (423 aa).

Residues K20, S21, and R25 each coordinate 3-phosphoshikimate. K20 is a binding site for phosphoenolpyruvate. Phosphoenolpyruvate contacts are provided by G91 and R119. 3-phosphoshikimate-binding residues include T163, S164, Q165, D305, Q328, and K332. Q165 lines the phosphoenolpyruvate pocket. The active-site Proton acceptor is the D305. Phosphoenolpyruvate-binding residues include R336 and R377.

It belongs to the EPSP synthase family. As to quaternary structure, monomer.

It is found in the cytoplasm. The enzyme catalyses 3-phosphoshikimate + phosphoenolpyruvate = 5-O-(1-carboxyvinyl)-3-phosphoshikimate + phosphate. It functions in the pathway metabolic intermediate biosynthesis; chorismate biosynthesis; chorismate from D-erythrose 4-phosphate and phosphoenolpyruvate: step 6/7. In terms of biological role, catalyzes the transfer of the enolpyruvyl moiety of phosphoenolpyruvate (PEP) to the 5-hydroxyl of shikimate-3-phosphate (S3P) to produce enolpyruvyl shikimate-3-phosphate and inorganic phosphate. The polypeptide is 3-phosphoshikimate 1-carboxyvinyltransferase (Acetivibrio thermocellus (strain ATCC 27405 / DSM 1237 / JCM 9322 / NBRC 103400 / NCIMB 10682 / NRRL B-4536 / VPI 7372) (Clostridium thermocellum)).